A 447-amino-acid chain; its full sequence is MSSNIPQNAVEVDTLSSIYTYKELSIDKLKHEYEITVGSNYIEQKVNSRLQEIAKNAKLPGFRSGKMPYDLVVTNYKNEALEYVVNSTIDYCSSDLMKKIEVKSHIYPKVDIMSLPNLNEEGEKSNFVYKLSFESMPEVPVIDLDKINLKKVEARIEEEDIKGFVDSIKTRFPSFVSVDDASYQAKNGDKLVIDFEGRIRNKLFQGGSNKNFKVTLGSGTFINGFENQLTGMKKGETKSFKLKFPEDYQTISLAGQEANFSVRVNDIQVAEDFGGDDEMAKKIGFRDCSSLKNHAKEVIGGQCEEMRDLLIKKELFDYLDANYSFDLPTDVVRQEQQRVERELGSKDDSCKEAERRVKLAMLFMKFSTEHKISLTQNDILNVIVNQYISKDVPFDRVFKHFKSDRQFQELVRGQALEHKVTSYIIEKVNKEEQIVSVKELKELFGNI.

The PPIase FKBP-type domain occupies 188 to 273 (GDKLVIDFEG…VNDIQVAEDF (86 aa)).

This sequence belongs to the FKBP-type PPIase family. Tig subfamily.

It localises to the cytoplasm. It catalyses the reaction [protein]-peptidylproline (omega=180) = [protein]-peptidylproline (omega=0). In terms of biological role, involved in protein export. Acts as a chaperone by maintaining the newly synthesized protein in an open conformation. Functions as a peptidyl-prolyl cis-trans isomerase. The protein is Trigger factor of Wolbachia sp. subsp. Brugia malayi (strain TRS).